The sequence spans 67 residues: Beta-defensin 1 (67 aa).

The first 22 residues, 1 to 22, serve as a signal peptide directing secretion; it reads MRIHYLLFAVLFLFLMPVPGEG. 3 disulfides stabilise this stretch: Cys-33/Cys-62, Cys-40/Cys-55, and Cys-45/Cys-63.

Monomer. Homodimer. Highly expressed in tongue, nasopharyngeal mucosa and skin, and to a lower extent in the Eustachian tube, lung and trachea.

Its subcellular location is the secreted. It localises to the membrane. Its function is as follows. Has antibacterial activity against Gram-positive bacterium S.pneumoniae Serotype 14. Is also active against Gram-negative bacteria M.catarrhalis 1857, and non-typeable H.influenzae strains 86-028NP and 1128. Has antifungal activity against C.albicans. May have a role in maintaining sterility in the middle ear. May act as a ligand for C-C chemokine receptor CCR6. Positively regulates the sperm motility and bactericidal activity in a CCR6-dependent manner. Binds to CCR6 and triggers Ca2+ mobilization in the sperm which is important for its motility. This Chinchilla lanigera (Long-tailed chinchilla) protein is Beta-defensin 1 (DEFB1).